Consider the following 435-residue polypeptide: Ribulose bisphosphate carboxylase-like protein (435 aa).

Mg(2+)-binding residues include Lys198, Asp200, and Glu201. Residue Lys198 is modified to N6-carboxylysine.

It belongs to the RuBisCO large chain family. Type IV subfamily. As to quaternary structure, homodimer. Mg(2+) serves as cofactor.

Functionally, may be involved in sulfur metabolism and oxidative stress response. Does not show RuBisCO activity. This Chlorobaculum tepidum (strain ATCC 49652 / DSM 12025 / NBRC 103806 / TLS) (Chlorobium tepidum) protein is Ribulose bisphosphate carboxylase-like protein.